A 43-amino-acid chain; its full sequence is Protein PsbN (43 aa).

The chain crosses the membrane as a helical span at residues 5–27 (TLVTISISCLLVSFTGYALYTAF).

It belongs to the PsbN family.

The protein localises to the plastid. The protein resides in the chloroplast thylakoid membrane. In terms of biological role, may play a role in photosystem I and II biogenesis. The chain is Protein PsbN from Pinus koraiensis (Korean pine).